The sequence spans 165 residues: AP-3 complex subunit sigma (165 aa).

Belongs to the adaptor complexes small subunit family. As to quaternary structure, adaptor protein complex 3 (AP-3) is a heterotetramer composed of 2 large adaptins (apl5 and apl6), a medium adaptin (apm3) and a small adaptin (aps3).

The protein localises to the golgi apparatus. The protein resides in the cytoplasmic vesicle membrane. Functionally, part of the AP-3 complex, an adaptor-related complex which is not clathrin-associated. The complex is associated with the Golgi region as well as more peripheral structures. It facilitates the budding of vesicles from the Golgi membrane and may be directly involved in trafficking to the vacuole. In Schizosaccharomyces pombe (strain 972 / ATCC 24843) (Fission yeast), this protein is AP-3 complex subunit sigma (aps3).